The primary structure comprises 87 residues: Omega-lycotoxin-Am1g (87 aa).

The signal sequence occupies residues 1 to 17 (MKLSIFFVLFFIAIAYC). A propeptide spanning residues 18-40 (QPEFLDDEEDEVEETLPVAEEGR) is cleaved from the precursor. Cystine bridges form between C44–C59, C51–C64, C58–C84, and C66–C82.

The protein belongs to the neurotoxin omega-lctx family. As to expression, expressed by the venom gland.

Its subcellular location is the secreted. In terms of biological role, modulates Cav2.1/CACNA1A voltage-gated calcium channels (P/Q-type currents) in rat cerebellar Purkinje cells and hippocampal CA1-CA3 neurons. At saturating concentrations (&gt;10 nM) decelerates activation kinetics and slightly increases peak amplitude without affecting deactivation kinetics. In vivo, does not cause death when intravenously injected into mice. In rat models, through its activity on Cav2.1/CACNA1A, has an ameliorative effect on memory defects provoked by hyperstimulation of N-methyl-D-aspartate receptors (NMDARs) in the hippocampus. The protein is Omega-lycotoxin-Am1g of Alopecosa marikovskyi (Wolf spider).